The chain runs to 267 residues: Hydroxyacylglutathione hydrolase (267 aa).

Residues His-55, His-57, Asp-59, His-60, His-121, Asp-138, and His-176 each coordinate Zn(2+).

It belongs to the metallo-beta-lactamase superfamily. Glyoxalase II family. In terms of assembly, monomer. It depends on Zn(2+) as a cofactor.

The catalysed reaction is an S-(2-hydroxyacyl)glutathione + H2O = a 2-hydroxy carboxylate + glutathione + H(+). It participates in secondary metabolite metabolism; methylglyoxal degradation; (R)-lactate from methylglyoxal: step 2/2. In terms of biological role, thiolesterase that catalyzes the hydrolysis of S-D-lactoyl-glutathione to form glutathione and D-lactic acid. The sequence is that of Hydroxyacylglutathione hydrolase from Shewanella oneidensis (strain ATCC 700550 / JCM 31522 / CIP 106686 / LMG 19005 / NCIMB 14063 / MR-1).